We begin with the raw amino-acid sequence, 429 residues long: ATP-dependent RNA helicase RhlB (429 aa).

The short motif at 9 to 37 (EKFAQMGLEPEVLAGLESKGFHYCTPIQA) is the Q motif element. Residues 40-219 (LPLLVEGHDL…YEHMNHPEHV (180 aa)) form the Helicase ATP-binding domain. Position 53-60 (53-60 (AQTGTGKT)) interacts with ATP. The DEAD box motif lies at 165 to 168 (DEAD). A Helicase C-terminal domain is found at 243–390 (KMLLLLSLME…VSKYDREALL (148 aa)). A disordered region spans residues 395–429 (APKRVVRNRQPVNRNMRDRQGGGNSNNRRRPPRKS).

It belongs to the DEAD box helicase family. RhlB subfamily. As to quaternary structure, component of the RNA degradosome, which is a multiprotein complex involved in RNA processing and mRNA degradation.

It localises to the cytoplasm. It carries out the reaction ATP + H2O = ADP + phosphate + H(+). DEAD-box RNA helicase involved in RNA degradation. Has RNA-dependent ATPase activity and unwinds double-stranded RNA. In Aeromonas salmonicida (strain A449), this protein is ATP-dependent RNA helicase RhlB.